The sequence spans 408 residues: Cytochrome bc1 complex Rieske iron-sulfur subunit (408 aa).

The next 3 membrane-spanning stretches (helical) occupy residues 56–76 (VTFW…TYIF), 98–118 (MLGI…VLYV), and 162–182 (LIMG…IAPM). The Rieske domain maps to 293–390 (HGPRNAVMLI…ITVDEEGYLI (98 aa)). [2Fe-2S] cluster contacts are provided by C333, H335, C352, and H355. Cysteines 338 and 354 form a disulfide.

It belongs to the Rieske iron-sulfur protein family. In terms of assembly, the cytochrome bc1 complex is composed of a cytochrome b (QcrB), the Rieske iron-sulfur protein (QcrA) and a diheme cytochrome c (QcrC) subunit. The bc1 complex forms a supercomplex with cytochrome c oxidase (cytochrome aa3). [2Fe-2S] cluster serves as cofactor.

The protein localises to the cell membrane. Iron-sulfur subunit of the cytochrome bc1 complex, an essential component of the respiratory electron transport chain required for ATP synthesis. The bc1 complex catalyzes the oxidation of menaquinol and the reduction of cytochrome c in the respiratory chain. The bc1 complex operates through a Q-cycle mechanism that couples electron transfer to generation of the proton gradient that drives ATP synthesis. This chain is Cytochrome bc1 complex Rieske iron-sulfur subunit (qcrA), found in Corynebacterium glutamicum (strain ATCC 13032 / DSM 20300 / JCM 1318 / BCRC 11384 / CCUG 27702 / LMG 3730 / NBRC 12168 / NCIMB 10025 / NRRL B-2784 / 534).